Consider the following 509-residue polypeptide: Transcription factor SOX-9 (509 aa).

2 disordered regions span residues 1-67 and 160-273; these read MNLL…SEED and RLRV…FRDV. The span at 30 to 41 shows a compositional bias: low complexity; that stretch reads SAGSPCPSGSGS. A compositionally biased stretch (polar residues) spans 42-52; the sequence is DTENTRPQENT. 2 stretches are compositionally biased toward basic and acidic residues: residues 56-67 and 160-174; these read GEPDLKKESEED and RLRV…DYKY. The segment at 63 to 103 is dimerization (DIM); the sequence is ESEEDKFPVCIREAVSQVLKGYDWTLVPMPVRVNGSSKNKP. A PQA region spans residues 63–103; it reads ESEEDKFPVCIREAVSQVLKGYDWTLVPMPVRVNGSSKNKP. Ser-64 is modified (phosphoserine). A DNA-binding region (HMG box) is located at residues 105 to 173; it reads VKRPMNAFMV…QHKKDHPDYK (69 aa). Ser-211 is subject to Phosphoserine. The tract at residues 224 to 307 is transactivation domain (TAM); it reads PGEHSGQSQG…LPPNGHPGVP (84 aa). 2 short sequence motifs (9aaTAD) span residues 275–284 and 290–298; these read IGELSSDVIS and DVNEFDQYL. The interval 334–415 is disordered; sequence VWMSKQQAPP…HYSEQQQHSP (82 aa). The span at 341–376 shows a compositional bias: pro residues; it reads APPPPPQQPPQAPPAPQAPPQPQAAPPQQPAAPPQQ. The span at 380 to 415 shows a compositional bias: polar residues; sequence HTLTTLSSEPGQSQRTHIKTEQLSPSHYSEQQQHSP. Positions 394-509 are transactivation domain (TAC); sequence RTHIKTEQLS…QPVYTQLTRP (116 aa). Lys-398 participates in a covalent cross-link: Glycyl lysine isopeptide (Lys-Gly) (interchain with G-Cter in ubiquitin). Residues 460–468 carry the 9aaTAD 3 motif; the sequence is TGLYSTFTY. The disordered stretch occupies residues 479 to 509; that stretch reads PIADTSGVPSIPQTHSPQHWEQPVYTQLTRP. Polar residues predominate over residues 485-509; that stretch reads GVPSIPQTHSPQHWEQPVYTQLTRP.

Homodimer; homodimerization is required for activity. Interacts (via C-terminus) with ZNF219; forming a complex that binds to the COL2A1 promoter and activates COL2A1 expression. Interacts with DDRGK1. Interacts with EP300/p300. Interacts with beta-catenin (CTNNB1); inhibiting CTNNB1 activity by competing with the binding sites of TCF/LEF within CTNNB1. Post-translationally, acetylated; acetylation impairs nuclear localization and ability to transactivate expression of target genes. Deacetylated by SIRT1. In terms of processing, phosphorylation at Ser-64 and Ser-211 by PKA increases transcriptional activity and may help delay chondrocyte maturation downstream of PTHLH/PTHrP signaling. Phosphorylation at either Ser-64 or Ser-211 is required for sumoylation, but phosphorylation is not dependent on sumoylation. Phosphorylated on tyrosine residues; tyrosine dephosphorylation by PTPN11/SHP2 blocks SOX9 phosphorylation by PKA and subsequent SUMOylation. Sumoylated; phosphorylation at either Ser-64 or Ser-211 is required for sumoylation. Sumoylation is induced by BMP signaling pathway. Post-translationally, ubiquitinated; ubiquitination leads to proteasomal degradation and is negatively regulated by DDRGK1.

It is found in the nucleus. In terms of biological role, transcription factor that plays a key role in chondrocytes differentiation and skeletal development. Specifically binds the 5'-ACAAAG-3' DNA motif present in enhancers and super-enhancers and promotes expression of genes important for chondrogenesis, including cartilage matrix protein-coding genes COL2A1, COL4A2, COL9A1, COL11A2 and ACAN, SOX5 and SOX6. Also binds to some promoter regions. Plays a central role in successive steps of chondrocyte differentiation. Absolutely required for precartilaginous condensation, the first step in chondrogenesis during which skeletal progenitors differentiate into prechondrocytes. Together with SOX5 and SOX6, required for overt chondrogenesis when condensed prechondrocytes differentiate into early stage chondrocytes, the second step in chondrogenesis. Later, required to direct hypertrophic maturation and block osteoblast differentiation of growth plate chondrocytes: maintains chondrocyte columnar proliferation, delays prehypertrophy and then prevents osteoblastic differentiation of chondrocytes by lowering beta-catenin (CTNNB1) signaling and RUNX2 expression. Also required for chondrocyte hypertrophy, both indirectly, by keeping the lineage fate of chondrocytes, and directly, by remaining present in upper hypertrophic cells and transactivating COL10A1 along with MEF2C. Low lipid levels are the main nutritional determinant for chondrogenic commitment of skeletal progenitor cells: when lipids levels are low, FOXO (FOXO1 and FOXO3) transcription factors promote expression of SOX9, which induces chondrogenic commitment and suppresses fatty acid oxidation. Mechanistically, helps, but is not required, to remove epigenetic signatures of transcriptional repression and deposit active promoter and enhancer marks at chondrocyte-specific genes. Acts in cooperation with the Hedgehog pathway-dependent GLI (GLI1 and GLI3) transcription factors. In addition to cartilage development, also acts as a regulator of proliferation and differentiation in epithelial stem/progenitor cells: involved in the lung epithelium during branching morphogenesis, by balancing proliferation and differentiation and regulating the extracellular matrix. Controls epithelial branching during kidney development. This Callithrix jacchus (White-tufted-ear marmoset) protein is Transcription factor SOX-9 (SOX9).